A 426-amino-acid chain; its full sequence is Histidine--tRNA ligase (426 aa).

The protein belongs to the class-II aminoacyl-tRNA synthetase family.

The protein resides in the cytoplasm. The catalysed reaction is tRNA(His) + L-histidine + ATP = L-histidyl-tRNA(His) + AMP + diphosphate + H(+). This is Histidine--tRNA ligase from Saccharolobus islandicus (strain Y.G.57.14 / Yellowstone #1) (Sulfolobus islandicus).